Here is a 339-residue protein sequence, read N- to C-terminus: Longiborneol synthase CLM1 (339 aa).

Residues 1 to 17 show a composition bias toward polar residues; that stretch reads MLATPTLSNFDKPSLPS. Positions 1–21 are disordered; that stretch reads MLATPTLSNFDKPSLPSSEGG. 4 residues coordinate Mg(2+): Asp-112, Asn-241, Ser-245, and Glu-249. Residues 241 to 249 carry the NDXXSXXXE magnesium-binding motif motif; the sequence is NDVLSFYKE.

The protein belongs to the trichodiene synthase family. The cofactor is Mg(2+). Mn(2+) serves as cofactor.

It carries out the reaction (2E,6E)-farnesyl diphosphate + H2O = (-)-longiborneol + diphosphate. It participates in mycotoxin biosynthesis. In terms of biological role, terpene cyclase involved in the biosynthesis of culmorin, a tricyclic sesquiterpene diol reported to have antifungal activity and some phytotoxicity to wheat coleoptile tissue, contributing to Fusarium head blight disease. The terpene cyclase CLM1 is responsible for the cyclization of farnesyl diphosphate into the intermediate longiborneol. Longiborneol is then hydroxylated in a regio- and endo-stereoselective manner at position C-11 by the cytochrome P450 monooxygenase CLM2 to produce culmorin. Additional non-specific oxygenases are also able to hydroxylate longiborneol at other sites than C-11 leading to 3-hydroxylongiborneol, 5-hydroxylongiborneol, 12-hydroxylongiborneol and 15-hydroxylongiborneol. Moreover, another oxygenase capable of installing a C-11 exo-hydroxy group in longiborneol can also yield 11-epi-acetylculmorin. The production of these longiborneol derivatives is dwarfed by the high abundance of culmorin, suggesting that CLM2 displays superior enzymatic activity to the unidentified, possibly promiscuous, additional oxygenases. The polypeptide is Longiborneol synthase CLM1 (Gibberella zeae (strain ATCC MYA-4620 / CBS 123657 / FGSC 9075 / NRRL 31084 / PH-1) (Wheat head blight fungus)).